A 169-amino-acid polypeptide reads, in one-letter code: Ribosome maturation factor RimM (169 aa).

Positions 97–169 constitute a PRC barrel domain; that stretch reads NDEAYFTDLI…KIVVDWEYDY (73 aa).

It belongs to the RimM family. In terms of assembly, binds ribosomal protein uS19.

Its subcellular location is the cytoplasm. In terms of biological role, an accessory protein needed during the final step in the assembly of 30S ribosomal subunit, possibly for assembly of the head region. Essential for efficient processing of 16S rRNA. May be needed both before and after RbfA during the maturation of 16S rRNA. It has affinity for free ribosomal 30S subunits but not for 70S ribosomes. The sequence is that of Ribosome maturation factor RimM from Francisella philomiragia subsp. philomiragia (strain ATCC 25017 / CCUG 19701 / FSC 153 / O#319-036).